Reading from the N-terminus, the 295-residue chain is Putative attaching and effacing protein homolog (295 aa).

An N-terminal signal peptide occupies residues methionine 1–alanine 25.

It belongs to the intimin/invasin family.

The chain is Putative attaching and effacing protein homolog (eaeH) from Escherichia coli (strain K12).